We begin with the raw amino-acid sequence, 530 residues long: Na(+)/H(+) antiporter NhaB (530 aa).

The next 12 membrane-spanning stretches (helical) occupy residues 13–33 (FLGKAPDWYKLAIISFLIINP), 98–118 (LLLVFMVAGIYFMKELLLFIF), 123–145 (LGIQSKILLSVAFCVAAAFLSAF), 149–166 (LTVIAVVISVAVGFYSIY), 205–225 (LLMHAGVGTALGGVMTMVGEP), 238–258 (FGEFIIRMLPVTLPVFFCGIL), 308–328 (IAVWLIVGLALHVAEVGLIGL), 330–350 (VIILATAFTGVIEEHSMGKAF), 356–376 (FTALLAVFFAVVAVIIDQALF), 393–413 (LALFYVANGILSMVSDNVFVG), 451–471 (ATPNGQAAFLFLLTSALAPLI), and 480–500 (IMALPYTIVLALVGLAGIVFF).

This sequence belongs to the NhaB Na(+)/H(+) (TC 2.A.34) antiporter family.

The protein resides in the cell inner membrane. The enzyme catalyses 2 Na(+)(in) + 3 H(+)(out) = 2 Na(+)(out) + 3 H(+)(in). Na(+)/H(+) antiporter that extrudes sodium in exchange for external protons. This is Na(+)/H(+) antiporter NhaB from Vibrio atlanticus (strain LGP32) (Vibrio splendidus (strain Mel32)).